Here is a 374-residue protein sequence, read N- to C-terminus: bZIP transcription factor TRAB1 (374 aa).

Over residues 1-13 (MDLKDGGGSERRG) the composition is skewed to basic and acidic residues. Disordered stretches follow at residues 1 to 23 (MDLKDGGGSERRGAAAGAGAGAA) and 117 to 142 (ASPGAAAADGGGGGGEQQQPRRQPTL). Low complexity predominate over residues 14 to 23 (AAAGAGAGAA). The bZIP domain occupies 286-349 (VERRQRRMIK…KNFFPEMQKN (64 aa)). Positions 288–307 (RRQRRMIKNRESAARSRARK) are basic motif. A leucine-zipper region spans residues 314–335 (LEAEVQKLKEQNMELQKKQEEI).

Belongs to the bZIP family. In terms of assembly, interacts with VP1 (via N-terminus). In terms of tissue distribution, expressed in roots, leaves and embryos.

The protein localises to the nucleus. Functionally, transcription activator that mediates abscisic acid (ABA) signaling. Binds specifically to the ABA-responsive element (ABRE) of the EMP1 and RAB16A gene promoters. This chain is bZIP transcription factor TRAB1, found in Oryza sativa subsp. japonica (Rice).